The chain runs to 302 residues: Aliphatic sulfonates import ATP-binding protein SsuB (302 aa).

Low complexity predominate over residues 30 to 57 (PATADAQHTADAQHTADAQHTADAQHTA). The tract at residues 30 to 65 (PATADAQHTADAQHTADAQHTADAQHTAETAETRGA) is disordered. The region spanning 70–284 (IRIRGLRRTF…RRTDPAFDRL (215 aa)) is the ABC transporter domain. 102-109 (GRSGSGKS) provides a ligand contact to ATP.

It belongs to the ABC transporter superfamily. Aliphatic sulfonates importer (TC 3.A.1.17.2) family. As to quaternary structure, the complex is composed of two ATP-binding proteins (SsuB), two transmembrane proteins (SsuC) and a solute-binding protein (SsuA).

The protein resides in the cell membrane. The enzyme catalyses ATP + H2O + aliphatic sulfonate-[sulfonate-binding protein]Side 1 = ADP + phosphate + aliphatic sulfonateSide 2 + [sulfonate-binding protein]Side 1.. Part of the ABC transporter complex SsuABC involved in aliphatic sulfonates import. Responsible for energy coupling to the transport system. The protein is Aliphatic sulfonates import ATP-binding protein SsuB of Frankia casuarinae (strain DSM 45818 / CECT 9043 / HFP020203 / CcI3).